The chain runs to 624 residues: Diatom spindle kinesin-1 (624 aa).

The segment at 1-59 (MNAANRRKSTSTVGITGRKDATRMKIEQMEKERKERRKTMMQRKEARKQEHMKNIEAGN) is disordered. Positions 1 to 85 (MNAANRRKST…QENKIGDKSP (85 aa)) are globular. Basic and acidic residues-rich tracts occupy residues 17–33 (GRKDATRMKIEQMEKER) and 42–54 (QRKEARKQEHMKN). The region spanning 95–411 (NICIAVRKRP…LRYADRIKEQ (317 aa)) is the Kinesin motor domain. An ATP-binding site is contributed by 186 to 193 (GQTGSGKT). The stretch at 426 to 624 (SNREIMPSKE…LARQVQLTQY (199 aa)) forms a coiled coil. The span at 478-511 (VDEEEADDEEGDYEEESEDLDYEDSEGQDYEEAV) shows a compositional bias: acidic residues. The interval 478 to 528 (VDEEEADDEEGDYEEESEDLDYEDSEGQDYEEAVESQYDHSQEAQEGEEEL) is disordered.

It belongs to the TRAFAC class myosin-kinesin ATPase superfamily. Kinesin family. MCAK/KIF2 subfamily.

Its subcellular location is the cytoplasm. It is found in the cytoskeleton. Functionally, involved in anaphase spindle elongation. This chain is Diatom spindle kinesin-1 (DSK1), found in Cylindrotheca fusiformis (Marine diatom).